Here is a 500-residue protein sequence, read N- to C-terminus: L-arabinose isomerase (500 aa).

Mn(2+) contacts are provided by E306, E333, H350, and H450.

This sequence belongs to the arabinose isomerase family. Homohexamer. Mn(2+) is required as a cofactor.

The catalysed reaction is beta-L-arabinopyranose = L-ribulose. Its pathway is carbohydrate degradation; L-arabinose degradation via L-ribulose; D-xylulose 5-phosphate from L-arabinose (bacterial route): step 1/3. In terms of biological role, catalyzes the conversion of L-arabinose to L-ribulose. This is L-arabinose isomerase from Salmonella newport (strain SL254).